The following is a 545-amino-acid chain: Chaperonin GroEL (545 aa).

Residues 29-32 (TLGP), K50, 86-90 (DGTTT), G415, and D495 contribute to the ATP site.

It belongs to the chaperonin (HSP60) family. In terms of assembly, forms a cylinder of 14 subunits composed of two heptameric rings stacked back-to-back. Interacts with the co-chaperonin GroES.

The protein resides in the cytoplasm. The enzyme catalyses ATP + H2O + a folded polypeptide = ADP + phosphate + an unfolded polypeptide.. Its function is as follows. Together with its co-chaperonin GroES, plays an essential role in assisting protein folding. The GroEL-GroES system forms a nano-cage that allows encapsulation of the non-native substrate proteins and provides a physical environment optimized to promote and accelerate protein folding. The polypeptide is Chaperonin GroEL (Bacteroides thetaiotaomicron (strain ATCC 29148 / DSM 2079 / JCM 5827 / CCUG 10774 / NCTC 10582 / VPI-5482 / E50)).